An 86-amino-acid chain; its full sequence is Cytochrome c-555 (86 aa).

Cys-14, Cys-17, His-18, and Met-60 together coordinate heme c.

Post-translationally, binds 1 heme c group covalently per subunit.

This basic c-type monoheme cytochrome has been found exclusively in the green photosynthetic bacteria, although its role in bacterial photosynthesis is not established. It has an unusually low redox potential compared with mitochondrial cytochrome c. It is reactive with cytochrome c oxidases but not with reductases. The chain is Cytochrome c-555 from Chlorobaculum thiosulfatiphilum (Chlorobium limicola f.sp. thiosulfatophilum).